Here is a 629-residue protein sequence, read N- to C-terminus: Microtubule-associated protein 70-3 (629 aa).

Residues 1–54 (MEEGGYAFEVNNGRPTASEFGTTARISSPSLTMSSSFREGGGGGGSKGLTRRRS) form a disordered region. A compositionally biased stretch (polar residues) spans 13–33 (GRPTASEFGTTARISSPSLTM). Positions 75–375 (VKVELNRLEN…ADRAAKSEAQ (301 aa)) form a coiled coil. The required for targeting to microtubules stretch occupies residues 257–493 (ILDKLHRQKV…FPLNQSSEGT (237 aa)). 3 disordered regions span residues 391 to 421 (LRGP…LGGA), 458 to 519 (GTSR…DSVP), and 578 to 629 (AMEK…RSTQ). Residues 393-416 (GPSSSGNRSTPEGRSMSNGPSRRQ) show a composition bias toward polar residues. A coiled-coil region spans residues 544 to 592 (LRDKDEAIEMLAKKVETLTKAMEVEAKKMRREVAAMEKEVSAMRVDNKG). A compositionally biased stretch (basic and acidic residues) spans 578 to 596 (AMEKEVSAMRVDNKGSDSR). Residues 603 to 613 (NSKGASTTAQL) are compositionally biased toward polar residues.

Belongs to the MAP70 family.

The protein localises to the cytoplasm. The protein resides in the cytoskeleton. Functionally, plant-specific protein that interact with microtubules. The sequence is that of Microtubule-associated protein 70-3 (MAP70.3) from Arabidopsis thaliana (Mouse-ear cress).